The following is a 696-amino-acid chain: Iron-sulfur clusters transporter ATM1, mitochondrial (696 aa).

The transit peptide at 1 to 67 (MIKWGLFGAV…RFFSSSHKLG (67 aa)) directs the protein to the mitochondrion. Residues 68–109 (VNTKEDSSTYLFGRKISTSESKMLKSLLVTIWPKNKPSFKLR) are Mitochondrial matrix-facing. A helical membrane pass occupies residues 110–131 (VIFALSLLIASKLLNVEVPFFF). The 291-residue stretch at 110-400 (VIFALSLLIA…LGSVYRELKQ (291 aa)) folds into the ABC transmembrane type-1 domain. At 132–154 (KKIIDEMNVDWNDQLGTVGTVIG) the chain is on the mitochondrial intermembrane side. The chain crosses the membrane as a helical span at residues 155–178 (TLIIAYGGARFGAVLFGELRNAVF). Topologically, residues 179–227 (ASVAQTAIKRVAHNTFVHLLNMDLNFHLSRQTGGLTRAIDRGTKGISYV) are mitochondrial matrix. A helical transmembrane segment spans residues 228-251 (LNAMVFHIIPISFEISMVCGILIY). Residue Asn-252 is a topological domain, mitochondrial intermembrane. Residues 253-273 (YGLSFAAVTLATMLSYSVFTI) form a helical membrane-spanning segment. Residues 274–339 (KTTAWRTGFR…ASVKVATSLA (66 aa)) lie on the Mitochondrial matrix side of the membrane. Glutathione contacts are provided by residues 279 to 283 (RTGFR) and 342 to 345 (NAGQ). The helical transmembrane segment at 340 to 358 (YLNAGQNFIFTSALTAMMY) threads the bilayer. At 359 to 373 (MGCNGVATGSLTVGD) the chain is on the mitochondrial intermembrane side. A helical transmembrane segment spans residues 374-395 (LVLINQLVFQLSVPLSFLGSVY). Glutathione is bound at residue Gly-392. The Mitochondrial matrix segment spans residues 396 to 696 (RELKQSLLDM…EYAKETEEQK (301 aa)). The ABC transporter domain occupies 438–674 (IKFENVTFGY…PNSLYSQLWN (237 aa)). ATP-binding positions include Tyr-447 and 471-482 (GPSGSGKSTILR).

It belongs to the ABC transporter superfamily. ABCB family. Heavy Metal importer (TC 3.A.1.210) subfamily. As to quaternary structure, homodimer.

Its subcellular location is the mitochondrion inner membrane. Performs an essential function in the generation of cytoplasmic iron-sulfur proteins by mediating the ATP-dependent export of Fe/S cluster precursors synthesized by NFS1 and other mitochondrial proteins. Hydrolyzes ATP. Binds glutathione and may function by transporting a glutathione-conjugated iron-sulfur compound. In Debaryomyces hansenii (strain ATCC 36239 / CBS 767 / BCRC 21394 / JCM 1990 / NBRC 0083 / IGC 2968) (Yeast), this protein is Iron-sulfur clusters transporter ATM1, mitochondrial.